A 231-amino-acid polypeptide reads, in one-letter code: Peroxisomal membrane protein 11E (231 aa).

The Cytoplasmic portion of the chain corresponds to 1–91 (MTTLDLTRAE…LPLVLLGKSK (91 aa)). Residues 92-108 (NALLSTFLFLDQIVWLG) form a helical membrane-spanning segment. The Lumenal portion of the chain corresponds to 109 to 202 (RSGIYKNKER…LLQLAPKTIS (94 aa)). Residues 203 to 222 (PRVTGAFGFTTSLISCYQLL) form a helical membrane-spanning segment. The Cytoplasmic portion of the chain corresponds to 223 to 231 (PSRPKLKTP).

The protein belongs to the peroxin-11 family. In terms of assembly, homooligomer. Interacts with ARC5 and FIS1B on peroxisomes. In terms of tissue distribution, expressed in leaves and developing siliques.

It is found in the peroxisome membrane. Its function is as follows. Involved in peroxisomal proliferation. Promotes peroxisomal duplication, aggregation or elongation without fission. The polypeptide is Peroxisomal membrane protein 11E (PEX11E) (Arabidopsis thaliana (Mouse-ear cress)).